Consider the following 269-residue polypeptide: uncharacterized protein (269 aa).

15 to 41 contributes to the NADP(+) binding site; that stretch reads QKSVLITGCSSGIGLESALELKRQGFH. Ser-146 lines the substrate pocket. Residue Tyr-159 is the Proton acceptor of the active site.

This sequence belongs to the short-chain dehydrogenases/reductases (SDR) family.

This is an uncharacterized protein from Escherichia coli O6:H1 (strain CFT073 / ATCC 700928 / UPEC).